We begin with the raw amino-acid sequence, 348 residues long: Protein pof5 (348 aa).

The protein to yeast YDR306C. In terms of assembly, interacts with skp1.

It localises to the mitochondrion. The protein is Protein pof5 (pof5) of Schizosaccharomyces pombe (strain 972 / ATCC 24843) (Fission yeast).